The following is a 101-amino-acid chain: Small ribosomal subunit protein uS14 (101 aa).

Belongs to the universal ribosomal protein uS14 family. Part of the 30S ribosomal subunit. Contacts proteins S3 and S10.

Functionally, binds 16S rRNA, required for the assembly of 30S particles and may also be responsible for determining the conformation of the 16S rRNA at the A site. This chain is Small ribosomal subunit protein uS14, found in Burkholderia multivorans (strain ATCC 17616 / 249).